Reading from the N-terminus, the 291-residue chain is Putative carboxymethylenebutenolidase (291 aa).

The signal sequence occupies residues methionine 1–alanine 40. Residues cysteine 170, aspartate 227, and histidine 259 contribute to the active site.

This sequence belongs to the dienelactone hydrolase family.

It carries out the reaction 2-(5-oxo-2,5-dihydrofuran-2-ylidene)acetate + H2O = 4-oxohex-2-enedioate + H(+). The protein is Putative carboxymethylenebutenolidase of Methylorubrum extorquens (strain ATCC 14718 / DSM 1338 / JCM 2805 / NCIMB 9133 / AM1) (Methylobacterium extorquens).